We begin with the raw amino-acid sequence, 77 residues long: Acyl carrier protein (77 aa).

One can recognise a Carrier domain in the interval 1–76; it reads MENFDKVKDI…DAVKYINSLE (76 aa). Ser-36 is subject to O-(pantetheine 4'-phosphoryl)serine.

Belongs to the acyl carrier protein (ACP) family. 4'-phosphopantetheine is transferred from CoA to a specific serine of apo-ACP by AcpS. This modification is essential for activity because fatty acids are bound in thioester linkage to the sulfhydryl of the prosthetic group.

It localises to the cytoplasm. Its pathway is lipid metabolism; fatty acid biosynthesis. Its function is as follows. Carrier of the growing fatty acid chain in fatty acid biosynthesis. In Staphylococcus epidermidis (strain ATCC 12228 / FDA PCI 1200), this protein is Acyl carrier protein.